Reading from the N-terminus, the 433-residue chain is uncharacterized protein (433 aa).

Belongs to the arrestin family.

This is an uncharacterized protein from Schizosaccharomyces pombe (strain 972 / ATCC 24843) (Fission yeast).